Reading from the N-terminus, the 360-residue chain is Probable CCR4-associated factor 1 homolog 1 (360 aa).

4 residues coordinate a divalent metal cation: D37, E39, D155, and D226.

This sequence belongs to the CAF1 family. Component of the CCR4-NOT complex, at least composed of CRR4 and CAF1 proteins. A divalent metal cation serves as cofactor.

Its subcellular location is the nucleus. The protein localises to the cytoplasm. It catalyses the reaction Exonucleolytic cleavage of poly(A) to 5'-AMP.. In terms of biological role, ubiquitous transcription factor required for a diverse set of processes. It is a component of the CCR4 complex involved in the control of gene expression. The protein is Probable CCR4-associated factor 1 homolog 1 (CAF1-1) of Arabidopsis thaliana (Mouse-ear cress).